Here is a 331-residue protein sequence, read N- to C-terminus: Cytosolic sulfotransferase 8 (331 aa).

Over residues 1-11 the composition is skewed to basic and acidic residues; it reads MGEKDIPRNLK. Residues 1-31 are disordered; it reads MGEKDIPRNLKEEEEEEEENQSEETKSLISS. Acidic residues predominate over residues 12 to 22; sequence EEEEEEEENQS. 80 to 85 is a 3'-phosphoadenylyl sulfate binding site; that stretch reads KSGTTW. The active-site Proton acceptor is the H145. Residues R167, S175, Y231, and 297-299 contribute to the 3'-phosphoadenylyl sulfate site; that span reads RKG.

The protein belongs to the sulfotransferase 1 family. As to expression, expressed in seedlings and roots.

The protein localises to the cytoplasm. Functionally, sulfotransferase that utilizes 3'-phospho-5'-adenylyl sulfate (PAPS) as sulfonate donor. No activity with brassinosteroids. This chain is Cytosolic sulfotransferase 8 (SOT8), found in Arabidopsis thaliana (Mouse-ear cress).